The sequence spans 141 residues: Large ribosomal subunit protein uL16 (141 aa).

This sequence belongs to the universal ribosomal protein uL16 family. As to quaternary structure, part of the 50S ribosomal subunit.

Its function is as follows. Binds 23S rRNA and is also seen to make contacts with the A and possibly P site tRNAs. The protein is Large ribosomal subunit protein uL16 of Deinococcus geothermalis (strain DSM 11300 / CIP 105573 / AG-3a).